We begin with the raw amino-acid sequence, 213 residues long: NADH-quinone oxidoreductase subunit B (213 aa).

The [4Fe-4S] cluster site is built by cysteine 38, cysteine 39, cysteine 104, and cysteine 133. A disordered region spans residues 172–213 (IMPENTNRFPGQLEKPKTSTLTLEAPDADDAEEASTPEPVAA). A compositionally biased stretch (acidic residues) spans 197–206 (PDADDAEEAS).

The protein belongs to the complex I 20 kDa subunit family. As to quaternary structure, NDH-1 is composed of 14 different subunits. Subunits NuoB, C, D, E, F, and G constitute the peripheral sector of the complex. [4Fe-4S] cluster serves as cofactor.

The protein localises to the cell inner membrane. The catalysed reaction is a quinone + NADH + 5 H(+)(in) = a quinol + NAD(+) + 4 H(+)(out). In terms of biological role, NDH-1 shuttles electrons from NADH, via FMN and iron-sulfur (Fe-S) centers, to quinones in the respiratory chain. The immediate electron acceptor for the enzyme in this species is believed to be a menaquinone. Couples the redox reaction to proton translocation (for every two electrons transferred, four hydrogen ions are translocated across the cytoplasmic membrane), and thus conserves the redox energy in a proton gradient. This Salinibacter ruber (strain DSM 13855 / M31) protein is NADH-quinone oxidoreductase subunit B (nuoB).